The chain runs to 67 residues: MPKMKTKKSMTRRVKVTATGKVMAFKSGKRHQNTGKSGDEIRGKGKGFVLAKSEWARMKLGLLAKGK.

Belongs to the bacterial ribosomal protein bL35 family.

The polypeptide is Large ribosomal subunit protein bL35 (Deinococcus geothermalis (strain DSM 11300 / CIP 105573 / AG-3a)).